The chain runs to 215 residues: Probable phosphoglycerate mutase GpmB (215 aa).

Substrate is bound by residues Arg-8–Asn-15, Gln-21–Gly-22, Arg-58, Lys-60, Glu-82–Met-85, Arg-104–Arg-105, and Gly-151–Ile-152. The active-site Tele-phosphohistidine intermediate is His-9. The Proton donor/acceptor role is filled by Glu-82.

Belongs to the phosphoglycerate mutase family. GpmB subfamily.

It catalyses the reaction (2R)-2-phosphoglycerate = (2R)-3-phosphoglycerate. It functions in the pathway carbohydrate degradation; glycolysis; pyruvate from D-glyceraldehyde 3-phosphate: step 3/5. The sequence is that of Probable phosphoglycerate mutase GpmB from Salmonella typhi.